The primary structure comprises 464 residues: Ubiquinone biosynthesis monooxygenase COQ6, mitochondrial (464 aa).

Residues 1 to 24 (MRCLGGSSLSRLLRMLSQSQGRAL) constitute a mitochondrion transit peptide.

It belongs to the UbiH/COQ6 family. In terms of assembly, component of a multi-subunit COQ enzyme complex, composed of at least coq3, coq4, coq5, coq6, coq7 and coq9. Interacts with coq8b and coq7. FAD is required as a cofactor.

Its subcellular location is the mitochondrion inner membrane. The protein localises to the golgi apparatus. It localises to the cell projection. It catalyses the reaction a 4-hydroxy-3-(all-trans-polyprenyl)benzoate + 2 reduced [2Fe-2S]-[ferredoxin] + O2 + 2 H(+) = a 3,4-dihydroxy-5-(all-trans-polyprenyl)benzoate + 2 oxidized [2Fe-2S]-[ferredoxin] + H2O. The catalysed reaction is a 2-methoxy-6-(all-trans-polyprenyl)phenol + 2 reduced [2Fe-2S]-[ferredoxin] + O2 + 2 H(+) = a 2-methoxy-6-(all-trans-polyprenyl)benzene-1,4-diol + 2 oxidized [2Fe-2S]-[ferredoxin] + H2O. It participates in cofactor biosynthesis; ubiquinone biosynthesis. Functionally, FAD-dependent monooxygenase required for two non-consecutive steps during ubiquinone biosynthesis. Required for the C5-ring hydroxylation during ubiquinone biosynthesis by catalyzing the hydroxylation of 4-hydroxy-3-(all-trans-polyprenyl)benzoic acid to 3,4-dihydroxy-5-(all-trans-polyprenyl)benzoic acid. Also acts downstream of coq4, for the C1-hydroxylation during ubiquinone biosynthesis by catalyzing the hydroxylation of 2-methoxy-6-(all-trans-polyprenyl)phenol to 2-methoxy-6-(all-trans-polyprenyl)benzene-1,4-diol. The electrons required for the hydroxylation reaction are funneled indirectly to coq6 from NADPH via a ferredoxin/ferredoxin reductase system. The chain is Ubiquinone biosynthesis monooxygenase COQ6, mitochondrial from Xenopus tropicalis (Western clawed frog).